Reading from the N-terminus, the 910-residue chain is Myelin regulatory factor-like protein (910 aa).

Residues G142–S405 constitute a DNA-binding region (NDT80). Positions R189–T208 are disordered. In terms of domain architecture, Peptidase S74 spans S451–I559. Positions G543–L575 form a coiled coil. Residues L628–I648 traverse the membrane as a helical segment. Residues L661–A682 are disordered. Positions P663–A682 are enriched in polar residues.

The protein belongs to the MRF family.

The protein localises to the membrane. The sequence is that of Myelin regulatory factor-like protein (MYRFL) from Homo sapiens (Human).